The following is a 76-amino-acid chain: Acyl carrier protein (76 aa).

The Carrier domain maps to 1-76 (MSVEEKVKKI…DAIDYVSNKQ (76 aa)). Ser-36 carries the post-translational modification O-(pantetheine 4'-phosphoryl)serine.

It belongs to the acyl carrier protein (ACP) family. Post-translationally, 4'-phosphopantetheine is transferred from CoA to a specific serine of apo-ACP by AcpS. This modification is essential for activity because fatty acids are bound in thioester linkage to the sulfhydryl of the prosthetic group.

The protein localises to the cytoplasm. Its pathway is lipid metabolism; fatty acid biosynthesis. Functionally, carrier of the growing fatty acid chain in fatty acid biosynthesis. In Nitratidesulfovibrio vulgaris (strain ATCC 29579 / DSM 644 / CCUG 34227 / NCIMB 8303 / VKM B-1760 / Hildenborough) (Desulfovibrio vulgaris), this protein is Acyl carrier protein.